A 207-amino-acid chain; its full sequence is Guanylate kinase (207 aa).

Residues 4–184 enclose the Guanylate kinase-like domain; that stretch reads GTLYIVSAPS…ALLDLKTIIR (181 aa). An ATP-binding site is contributed by 11–18; sequence APSGAGKS.

This sequence belongs to the guanylate kinase family.

It localises to the cytoplasm. The enzyme catalyses GMP + ATP = GDP + ADP. In terms of biological role, essential for recycling GMP and indirectly, cGMP. In Sodalis glossinidius (strain morsitans), this protein is Guanylate kinase.